Reading from the N-terminus, the 1413-residue chain is DNA-directed RNA polymerase subunit beta' (1413 aa).

Zn(2+)-binding residues include Cys70, Cys72, Cys85, and Cys88. Positions 460, 462, and 464 each coordinate Mg(2+). 4 residues coordinate Zn(2+): Cys814, Cys888, Cys895, and Cys898.

It belongs to the RNA polymerase beta' chain family. The RNAP catalytic core consists of 2 alpha, 1 beta, 1 beta' and 1 omega subunit. When a sigma factor is associated with the core the holoenzyme is formed, which can initiate transcription. It depends on Mg(2+) as a cofactor. The cofactor is Zn(2+).

The catalysed reaction is RNA(n) + a ribonucleoside 5'-triphosphate = RNA(n+1) + diphosphate. Functionally, DNA-dependent RNA polymerase catalyzes the transcription of DNA into RNA using the four ribonucleoside triphosphates as substrates. The polypeptide is DNA-directed RNA polymerase subunit beta' (Buchnera aphidicola subsp. Schizaphis graminum (strain Sg)).